The sequence spans 330 residues: Tryptophan--tRNA ligase (330 aa).

Residues Gln-10–Ser-12 and Gly-18–Asn-19 each bind ATP. Residues Pro-11–Asn-19 carry the 'HIGH' region motif. Asp-133 lines the L-tryptophan pocket. ATP is bound by residues Gly-145 to Asp-147, Ile-184, and Lys-193 to Ser-197. The 'KMSKS' region motif lies at Lys-193–Ser-197.

Belongs to the class-I aminoacyl-tRNA synthetase family. Homodimer.

The protein localises to the cytoplasm. The enzyme catalyses tRNA(Trp) + L-tryptophan + ATP = L-tryptophyl-tRNA(Trp) + AMP + diphosphate + H(+). In terms of biological role, catalyzes the attachment of tryptophan to tRNA(Trp). This Bacillus subtilis (strain 168) protein is Tryptophan--tRNA ligase.